We begin with the raw amino-acid sequence, 266 residues long: MIQITVVQIDNYGPWTVTPNPRRESDLQALQSRLYCDMNLQFGAHRGLAFYTRFDNIIAITNGIDLETHKRIQNSVKNRYPFTVSMAVASAETAYEAQKLATETIQEYGSAQDDVRKEVLDVANEFVSNGYVQLAHVDINDITGKLTDLETAYDTYLSVQMTKLKLMEELKKYDSMGFFIGGDNFMCPCNGMSEKDFLCMFEDIRDSCGIDLKAGIGIGKTAEDASNLADIGLEVIREGKTDFQVYTLKQSIEERKDITYNYMCPI.

It belongs to the archaeal-type GTP cyclohydrolase family.

It catalyses the reaction GTP + 3 H2O = 2-amino-5-formylamino-6-(5-phospho-D-ribosylamino)pyrimidin-4(3H)-one + 2 phosphate + 2 H(+). Functionally, catalyzes the formation of 2-amino-5-formylamino-6-ribofuranosylamino-4(3H)-pyrimidinone ribonucleotide monophosphate and inorganic phosphate from GTP. Also has an independent pyrophosphate phosphohydrolase activity. This chain is GTP cyclohydrolase III, found in Methanococcus maripaludis (strain C7 / ATCC BAA-1331).